Reading from the N-terminus, the 100-residue chain is Probable antitoxin MazE1 (100 aa).

Positions 77–100 (PYESEAERSAARARRNARQQRSAQ) are disordered.

In terms of assembly, forms a complex with cognate toxin MazF1.

Its function is as follows. Probable antitoxin component of a type II toxin-antitoxin (TA) system. Labile antitoxin that binds to cognate MazF1 toxin and counteracts its endoribonuclease activity. The sequence is that of Probable antitoxin MazE1 (mazE1) from Mycobacterium bovis (strain ATCC BAA-935 / AF2122/97).